We begin with the raw amino-acid sequence, 276 residues long: 2-dehydro-3-deoxyphosphooctonate aldolase (276 aa).

This sequence belongs to the KdsA family.

The protein localises to the cytoplasm. The catalysed reaction is D-arabinose 5-phosphate + phosphoenolpyruvate + H2O = 3-deoxy-alpha-D-manno-2-octulosonate-8-phosphate + phosphate. Its pathway is carbohydrate biosynthesis; 3-deoxy-D-manno-octulosonate biosynthesis; 3-deoxy-D-manno-octulosonate from D-ribulose 5-phosphate: step 2/3. It functions in the pathway bacterial outer membrane biogenesis; lipopolysaccharide biosynthesis. The polypeptide is 2-dehydro-3-deoxyphosphooctonate aldolase (Xanthomonas campestris pv. campestris (strain 8004)).